We begin with the raw amino-acid sequence, 216 residues long: LexA repressor (216 aa).

The H-T-H motif DNA-binding region spans 28-48 (RAEIAAELGFSSANSAEEHLR). Residues S134 and K171 each act as for autocatalytic cleavage activity in the active site.

The protein belongs to the peptidase S24 family. As to quaternary structure, homodimer.

It carries out the reaction Hydrolysis of Ala-|-Gly bond in repressor LexA.. Functionally, represses a number of genes involved in the response to DNA damage (SOS response), including recA and lexA. In the presence of single-stranded DNA, RecA interacts with LexA causing an autocatalytic cleavage which disrupts the DNA-binding part of LexA, leading to derepression of the SOS regulon and eventually DNA repair. The chain is LexA repressor from Paraburkholderia phytofirmans (strain DSM 17436 / LMG 22146 / PsJN) (Burkholderia phytofirmans).